The sequence spans 774 residues: Lysyl oxidase homolog 2 (774 aa).

The signal sequence occupies residues 1 to 25 (MERRGSSCLCRCLALLALLPTLSLA). SRCR domains are found at residues 58–159 (LRLA…VVCS), 188–302 (IRAI…VSCV), 326–425 (VRLR…VRCN), and 435–544 (LRLN…VACS). Cystine bridges form between Cys-84–Cys-148, Cys-97–Cys-158, Cys-128–Cys-138, Cys-218–Cys-291, Cys-231–Cys-301, Cys-265–Cys-275, Cys-351–Cys-414, Cys-364–Cys-424, and Cys-395–Cys-405. An N-linked (GlcNAc...) asparagine glycan is attached at Asn-288. N-linked (GlcNAc...) asparagine glycosylation is present at Asn-455. 3 disulfide bridges follow: Cys-464/Cys-530, Cys-477/Cys-543, and Cys-511/Cys-521. The tract at residues 548–751 (PDLVLNAEIV…WMYNCHIGGS (204 aa)) is lysyl-oxidase like. Ca(2+)-binding residues include Asp-549 and Leu-550. 4 disulfide bridges follow: Cys-573–Cys-625, Cys-579–Cys-695, Cys-657–Cys-673, and Cys-663–Cys-685. Positions 626, 628, and 630 each coordinate Cu cation. Asn-644 carries an N-linked (GlcNAc...) asparagine glycan. The segment at residues 653 to 689 (KASFCLEDTECEGDIQKSYECANFGEQGITMGCWDMY) is a cross-link (lysine tyrosylquinone (Lys-Tyr)). Tyr-689 bears the 2',4',5'-topaquinone mark. The Ca(2+) site is built by Glu-722, Asp-724, Asn-727, and Asn-728. A disulfide bond links Cys-732 and Cys-746.

The protein belongs to the lysyl oxidase family. Component of some chromatin repressor complex. Interacts with SNAI1. Interacts with TAF10. Interacts with HSPA5. Interacts with EFEMP2. Cu cation is required as a cofactor. Lysine tyrosylquinone residue serves as cofactor. In terms of processing, the lysine tyrosylquinone cross-link (LTQ) is generated by condensation of the epsilon-amino group of a lysine with a topaquinone produced by oxidation of tyrosine. Post-translationally, N-glycosylated. N-glycosylation on Asn-455 and Asn-644 may be essential for proper folding and secretion; may be composed of a fucosylated carbohydrates attached to a trimannose N-linked glycan core.

The protein resides in the secreted. It is found in the extracellular space. It localises to the extracellular matrix. The protein localises to the basement membrane. Its subcellular location is the nucleus. The protein resides in the chromosome. It is found in the endoplasmic reticulum. The enzyme catalyses L-lysyl-[protein] + O2 + H2O = (S)-2-amino-6-oxohexanoyl-[protein] + H2O2 + NH4(+). Its activity is regulated as follows. Specifically inhibited by a mouse monoclonal antibody AB0023, inhibition occurs in a non-competitive manner. Functionally, mediates the post-translational oxidative deamination of lysine residues on target proteins leading to the formation of deaminated lysine (allysine). Acts as a transcription corepressor and specifically mediates deamination of trimethylated 'Lys-4' of histone H3 (H3K4me3), a specific tag for epigenetic transcriptional activation. Shows no activity against histone H3 when it is trimethylated on 'Lys-9' (H3K9me3) or 'Lys-27' (H3K27me3) or when 'Lys-4' is monomethylated (H3K4me1) or dimethylated (H3K4me2). Also mediates deamination of methylated TAF10, a member of the transcription factor IID (TFIID) complex, which induces release of TAF10 from promoters, leading to inhibition of TFIID-dependent transcription. LOXL2-mediated deamination of TAF10 results in transcriptional repression of genes required for embryonic stem cell pluripotency including POU5F1/OCT4, NANOG, KLF4 and SOX2. Involved in epithelial to mesenchymal transition (EMT) via interaction with SNAI1 and participates in repression of E-cadherin CDH1, probably by mediating deamination of histone H3. During EMT, involved with SNAI1 in negatively regulating pericentromeric heterochromatin transcription. SNAI1 recruits LOXL2 to pericentromeric regions to oxidize histone H3 and repress transcription which leads to release of heterochromatin component CBX5/HP1A, enabling chromatin reorganization and acquisition of mesenchymal traits. Interacts with the endoplasmic reticulum protein HSPA5 which activates the IRE1-XBP1 pathway of the unfolded protein response, leading to expression of several transcription factors involved in EMT and subsequent EMT induction. When secreted into the extracellular matrix, promotes cross-linking of extracellular matrix proteins by mediating oxidative deamination of peptidyl lysine residues in precursors to fibrous collagen and elastin. Acts as a regulator of sprouting angiogenesis, probably via collagen IV scaffolding. Acts as a regulator of chondrocyte differentiation, probably by regulating expression of factors that control chondrocyte differentiation. The protein is Lysyl oxidase homolog 2 (LOXL2) of Bos taurus (Bovine).